A 325-amino-acid chain; its full sequence is dITP/XTP pyrophosphatase (325 aa).

The segment at 1–128 is unknown; the sequence is MKEKIYEYKD…KKVSELGDTI (128 aa). The interval 129 to 324 is NTP pyrophosphatase; it reads LIATRNEGKT…MEVFPAWQNA (196 aa). 132-137 lines the substrate pocket; it reads TRNEGK. Mg(2+)-binding residues include E165 and D194. Catalysis depends on D194, which acts as the Proton acceptor. Substrate-binding positions include S195, 278–281, K301, and 306–307; these read FGYD and HR.

The protein belongs to the HAM1 NTPase family. Homodimer. The cofactor is Mg(2+).

The catalysed reaction is XTP + H2O = XMP + diphosphate + H(+). It catalyses the reaction dITP + H2O = dIMP + diphosphate + H(+). It carries out the reaction ITP + H2O = IMP + diphosphate + H(+). Functionally, pyrophosphatase that catalyzes the hydrolysis of nucleoside triphosphates to their monophosphate derivatives, with a high preference for the non-canonical purine nucleotides XTP (xanthosine triphosphate), dITP (deoxyinosine triphosphate) and ITP. Seems to function as a house-cleaning enzyme that removes non-canonical purine nucleotides from the nucleotide pool, thus preventing their incorporation into DNA/RNA and avoiding chromosomal lesions. The polypeptide is dITP/XTP pyrophosphatase (Streptococcus mutans serotype c (strain ATCC 700610 / UA159)).